The primary structure comprises 192 residues: uncharacterized protein (192 aa).

It to M.thermoautotrophicum MTH863.

This is an uncharacterized protein from Methanocaldococcus jannaschii (strain ATCC 43067 / DSM 2661 / JAL-1 / JCM 10045 / NBRC 100440) (Methanococcus jannaschii).